The chain runs to 144 residues: Large ribosomal subunit protein uL16 (144 aa).

This sequence belongs to the universal ribosomal protein uL16 family. Part of the 50S ribosomal subunit.

Functionally, binds 23S rRNA and is also seen to make contacts with the A and possibly P site tRNAs. The polypeptide is Large ribosomal subunit protein uL16 (Bacillus cytotoxicus (strain DSM 22905 / CIP 110041 / 391-98 / NVH 391-98)).